The sequence spans 123 residues: Small ribosomal subunit protein uS12 (123 aa).

Asp-89 is modified (3-methylthioaspartic acid). A disordered region spans residues Ser-101–Lys-123. Over residues Gly-113 to Lys-123 the composition is skewed to basic residues.

This sequence belongs to the universal ribosomal protein uS12 family. Part of the 30S ribosomal subunit. Contacts proteins S8 and S17. May interact with IF1 in the 30S initiation complex.

Its function is as follows. With S4 and S5 plays an important role in translational accuracy. Functionally, interacts with and stabilizes bases of the 16S rRNA that are involved in tRNA selection in the A site and with the mRNA backbone. Located at the interface of the 30S and 50S subunits, it traverses the body of the 30S subunit contacting proteins on the other side and probably holding the rRNA structure together. The combined cluster of proteins S8, S12 and S17 appears to hold together the shoulder and platform of the 30S subunit. In Azotobacter vinelandii (strain DJ / ATCC BAA-1303), this protein is Small ribosomal subunit protein uS12.